The following is an 89-amino-acid chain: Microcin N (89 aa).

An N-terminal signal peptide occupies residues 1 to 15 (MRELDREELNCVGGA).

The protein belongs to the class IIa microcin family. Mass spectrometry suggests 3 of the 4 Met residues of the mature peptide are oxidized.

The protein localises to the secreted. Active against E.coli and Salmonella, but not Listeria or Campylobacter. Channel-forming microcin. Probably neutralized by its immunity protein McnI. This is Microcin N from Escherichia coli.